Here is a 111-residue protein sequence, read N- to C-terminus: Large ribosomal subunit protein P1 (111 aa).

Residues 84–111 form a disordered region; it reads PAEAAAAEEKKEEEKEESDEDMGFGLFD.

The protein belongs to the eukaryotic ribosomal protein P1/P2 family. As to quaternary structure, P1 and P2 exist as dimers at the large ribosomal subunit. In terms of processing, phosphorylated.

Functionally, plays an important role in the elongation step of protein synthesis. This is Large ribosomal subunit protein P1 from Aspergillus fumigatus (strain ATCC MYA-4609 / CBS 101355 / FGSC A1100 / Af293) (Neosartorya fumigata).